The chain runs to 235 residues: Uridylate kinase (235 aa).

Position 9 to 12 (K9 to G12) interacts with ATP. G51 contributes to the UMP binding site. Residues G52 and R56 each contribute to the ATP site. UMP is bound by residues D71 and T132–T139. ATP contacts are provided by T159, Y165, and D168.

This sequence belongs to the UMP kinase family. As to quaternary structure, homohexamer.

Its subcellular location is the cytoplasm. It catalyses the reaction UMP + ATP = UDP + ADP. Its pathway is pyrimidine metabolism; CTP biosynthesis via de novo pathway; UDP from UMP (UMPK route): step 1/1. With respect to regulation, inhibited by UTP. Catalyzes the reversible phosphorylation of UMP to UDP. This is Uridylate kinase from Flavobacterium psychrophilum (strain ATCC 49511 / DSM 21280 / CIP 103535 / JIP02/86).